A 176-amino-acid chain; its full sequence is Inner membrane-spanning protein YciB (176 aa).

Transmembrane regions (helical) follow at residues isoleucine 22–leucine 42, valine 50–asparagine 70, isoleucine 81–isoleucine 101, isoleucine 121–leucine 141, and phenylalanine 149–isoleucine 169.

The protein belongs to the YciB family.

The protein localises to the cell inner membrane. Functionally, plays a role in cell envelope biogenesis, maintenance of cell envelope integrity and membrane homeostasis. This chain is Inner membrane-spanning protein YciB, found in Sodalis glossinidius (strain morsitans).